Reading from the N-terminus, the 436-residue chain is Anaerobic glycerol-3-phosphate dehydrogenase subunit B (436 aa).

Belongs to the anaerobic G-3-P dehydrogenase subunit B family. In terms of assembly, composed of a catalytic GlpA/B dimer and of membrane bound GlpC. The cofactor is FMN.

The catalysed reaction is a quinone + sn-glycerol 3-phosphate = dihydroxyacetone phosphate + a quinol. It functions in the pathway polyol metabolism; glycerol degradation via glycerol kinase pathway; glycerone phosphate from sn-glycerol 3-phosphate (anaerobic route): step 1/1. Its function is as follows. Conversion of glycerol 3-phosphate to dihydroxyacetone. Uses fumarate or nitrate as electron acceptor. This chain is Anaerobic glycerol-3-phosphate dehydrogenase subunit B, found in Vibrio cholerae serotype O1 (strain M66-2).